A 158-amino-acid chain; its full sequence is NAD(P)H-quinone oxidoreductase subunit J, chloroplastic (158 aa).

Belongs to the complex I 30 kDa subunit family. As to quaternary structure, NDH is composed of at least 16 different subunits, 5 of which are encoded in the nucleus.

The protein localises to the plastid. It is found in the chloroplast thylakoid membrane. The catalysed reaction is a plastoquinone + NADH + (n+1) H(+)(in) = a plastoquinol + NAD(+) + n H(+)(out). The enzyme catalyses a plastoquinone + NADPH + (n+1) H(+)(in) = a plastoquinol + NADP(+) + n H(+)(out). Functionally, NDH shuttles electrons from NAD(P)H:plastoquinone, via FMN and iron-sulfur (Fe-S) centers, to quinones in the photosynthetic chain and possibly in a chloroplast respiratory chain. The immediate electron acceptor for the enzyme in this species is believed to be plastoquinone. Couples the redox reaction to proton translocation, and thus conserves the redox energy in a proton gradient. This is NAD(P)H-quinone oxidoreductase subunit J, chloroplastic from Morus indica (Mulberry).